A 310-amino-acid chain; its full sequence is Acetyl-coenzyme A carboxylase carboxyl transferase subunit beta (310 aa).

A CoA carboxyltransferase N-terminal domain is found at 27-296 (LWKKCPKCSA…PEFENEEELE (270 aa)). The Zn(2+) site is built by Cys31, Cys34, Cys50, and Cys53. The C4-type zinc finger occupies 31–53 (CPKCSAVLYRPELEKNLDVCPKC). The segment at 285–310 (PEPEFENEEELEEEEMERPEPPDNVE) is disordered. Over residues 287–310 (PEFENEEELEEEEMERPEPPDNVE) the composition is skewed to acidic residues.

This sequence belongs to the AccD/PCCB family. In terms of assembly, acetyl-CoA carboxylase is a heterohexamer composed of biotin carboxyl carrier protein (AccB), biotin carboxylase (AccC) and two subunits each of ACCase subunit alpha (AccA) and ACCase subunit beta (AccD). The cofactor is Zn(2+).

The protein localises to the cytoplasm. It catalyses the reaction N(6)-carboxybiotinyl-L-lysyl-[protein] + acetyl-CoA = N(6)-biotinyl-L-lysyl-[protein] + malonyl-CoA. It functions in the pathway lipid metabolism; malonyl-CoA biosynthesis; malonyl-CoA from acetyl-CoA: step 1/1. Component of the acetyl coenzyme A carboxylase (ACC) complex. Biotin carboxylase (BC) catalyzes the carboxylation of biotin on its carrier protein (BCCP) and then the CO(2) group is transferred by the transcarboxylase to acetyl-CoA to form malonyl-CoA. In Hahella chejuensis (strain KCTC 2396), this protein is Acetyl-coenzyme A carboxylase carboxyl transferase subunit beta.